The following is an 834-amino-acid chain: Sodium/hydrogen exchanger 3 (834 aa).

An N-terminal signal peptide occupies residues Met-1–Ala-25. At Gly-26–His-51 the chain is on the extracellular side. Residues Val-52–Leu-74 traverse the membrane as a helical segment. The Cytoplasmic portion of the chain corresponds to Ser-75 to Val-82. A helical membrane pass occupies residues Pro-83–Ala-102. Topologically, residues Asp-103 to Thr-111 are extracellular. A helical transmembrane segment spans residues Pro-112–Tyr-129. Residues Phe-130–Pro-132 lie on the Cytoplasmic side of the membrane. A helical transmembrane segment spans residues Asn-133–Ser-168. Residues Gly-138, Gly-141, and Thr-142 each contribute to the a 1,2-diacyl-sn-glycero-3-phospho-(1D-myo-inositol) site. Residues Gly-169–Phe-181 are Extracellular-facing. The chain crosses the membrane as a helical span at residues Leu-182–Val-203. At His-204 to Val-205 the chain is on the cytoplasmic side. The chain crosses the membrane as a helical span at residues Asn-206–Leu-237. Topologically, residues Gly-238–Gly-244 are extracellular. The N-linked (GlcNAc...) asparagine glycan is linked to Asn-241. Residues Val-245 to Thr-279 traverse the membrane as a helical segment. Residues Lys-280–His-281 lie on the Cytoplasmic side of the membrane. The helical transmembrane segment at Val-282–Leu-304 threads the bilayer. Residues Ser-305–Leu-306 lie on the Extracellular side of the membrane. Residues Ser-307–Val-323 form a helical membrane-spanning segment. Over Lys-324–Gln-330 the chain is Cytoplasmic. A helical membrane pass occupies residues Ser-331 to Val-359. The Extracellular segment spans residues Asn-360–Asn-367. Residues Thr-368–Gln-389 form a helical membrane-spanning segment. Over Thr-390 to Glu-402 the chain is Cytoplasmic. Met-398 provides a ligand contact to a 1,2-diacyl-sn-glycero-3-phospho-(1D-myo-inositol). Residues Pro-403–Leu-426 traverse the membrane as a helical segment. At Asp-427–Glu-433 the chain is on the extracellular side. The helical transmembrane segment at Lys-434–Arg-467 threads the bilayer. Residues Ser-468–Met-834 lie on the Cytoplasmic side of the membrane. Residues Gln-497, Ile-498, and His-500 each contribute to the a 1,2-diacyl-sn-glycero-3-phospho-(1D-myo-inositol) site. Ser-555 and Ser-563 each carry phosphoserine. An interaction with EZR region spans residues Arg-575–Glu-589. Residues Asn-590–Thr-667 form an interaction with NHERF4 region. Residues Val-591–Pro-695 form an interaction with AHCYL1 region. 2 positions are modified to phosphoserine: Ser-592 and Ser-607. Residue Ser-663 is modified to Phosphoserine; by SGK1. Over residues Lys-679–Asn-691 the composition is skewed to basic residues. The disordered stretch occupies residues Lys-679–Glu-728. The span at Leu-717–Glu-728 shows a compositional bias: acidic residues. Phosphoserine is present on residues Ser-718, Ser-810, and Ser-813. The tract at residues Phe-814–Met-834 is disordered.

This sequence belongs to the monovalent cation:proton antiporter 1 (CPA1) transporter (TC 2.A.36) family. As to quaternary structure, homodimer. Found in the forms of complex and dynamic macromolecular complexes. Binds NHERF1 and NHERF2. Interacts with CHP1; increases SLC9A3 trafficking and activity at the plasma membrane. Interacts with CHP2 and SHANK2. Interacts with PDZK1 (via C-terminal PDZ domain). Interacts with NHERF4 and interaction decrease in response to elevated calcium ion levels. Interacts with AHCYL1; the interaction is required for SLC9A3 activity. Interacts with SNX27 (via PDZ domains); directs SLC9A3 membrane insertion from early endosomes to the plasma membrane. Interacts with EZR; interaction targets SLC9A3 to the apical membrane. Post-translationally, phosphorylated by PKA, which inhibits activity. Phosphorylation at Ser-663 by SGK1 is associated with increased abundance at the cell membrane. Phosphorylation at Ser-718 by CSNK2A1 regulates SLC9A3 activity through the formation of multiple signaling complexes.

It is found in the apical cell membrane. The protein resides in the cell membrane. Its subcellular location is the recycling endosome membrane. It localises to the early endosome membrane. The enzyme catalyses Na(+)(in) + H(+)(out) = Na(+)(out) + H(+)(in). Its activity is regulated as follows. Seems to switch between active and inactive modes in response to various stimuli. Activated directly or indirectly by membrane phosphatidylinositol (PIs). Regulated by a variety of auxiliary proteins, which facilitate the maturation, cell surface expression and function of the transporter. Inhibited specifically by the drug tenapanor. Its function is as follows. Plasma membrane Na(+)/H(+) antiporter. Exchanges intracellular H(+) ions for extracellular Na(+) in 1:1 stoichiometry, playing a key role in salt and fluid absorption and pH homeostasis. Major apical Na(+)/H(+) exchanger in kidney and intestine playing an important role in renal and intestine Na(+) absorption and blood pressure regulation. The polypeptide is Sodium/hydrogen exchanger 3 (Homo sapiens (Human)).